Here is a 384-residue protein sequence, read N- to C-terminus: MGVKGLNQLIKEHSPHAYKEFELKNLFGRKVAIDASMCLYQFLIAVRQSDGQQLTNDEGETTSHLSGIFYRTIRMVENNIKPVYVFDGKPPVLKGGELEKRLLKREEAQKQIDNLKDDASVSDMTKYQKRLVRVSRDQNDEAKKLLELMGIPYVNAPCEAEAQCAELARGGKVFAAASEDMDTLCYEPPQLLRHLTFAEARKMPIDQITYKEAIQGLDMTKEQFIDLCILLGCDYCETIKGVGPVTAYKLIKEHGSLDNIVKYLQENPDKTKYKVPENWPYNEARQLFMKPEVLPALEVELKWKEPDLDGLIEYMVKNKGFSEDRIRSGAEKLKKGLKAGIQGRLDGFFTVVPKYSNTSPLGKDDKKRKTNDKKGAAAKKTKRR.

Residues 1-105 are N-domain; the sequence is MGVKGLNQLI…GELEKRLLKR (105 aa). Mg(2+) is bound at residue aspartate 34. DNA is bound by residues arginine 47 and arginine 71. Residues aspartate 87, glutamate 159, glutamate 161, aspartate 180, and aspartate 182 each coordinate Mg(2+). Residues 123-254 form an I-domain region; the sequence is DMTKYQKRLV…VTAYKLIKEH (132 aa). Glutamate 159 is a DNA binding site. DNA contacts are provided by glycine 232 and aspartate 234. Aspartate 234 contacts Mg(2+). The interaction with PCNA stretch occupies residues 341 to 349; the sequence is IQGRLDGFF. The segment at 354-384 is disordered; the sequence is KYSNTSPLGKDDKKRKTNDKKGAAAKKTKRR. The span at 362–375 shows a compositional bias: basic and acidic residues; the sequence is GKDDKKRKTNDKKG.

The protein belongs to the XPG/RAD2 endonuclease family. FEN1 subfamily. In terms of assembly, interacts with PCNA. Three molecules of FEN1 bind to one PCNA trimer with each molecule binding to one PCNA monomer. PCNA stimulates the nuclease activity without altering cleavage specificity. Mg(2+) is required as a cofactor. Post-translationally, phosphorylated. Phosphorylation upon DNA damage induces relocalization to the nuclear plasma.

The protein localises to the nucleus. It localises to the nucleolus. Its subcellular location is the nucleoplasm. It is found in the mitochondrion. Structure-specific nuclease with 5'-flap endonuclease and 5'-3' exonuclease activities involved in DNA replication and repair. During DNA replication, cleaves the 5'-overhanging flap structure that is generated by displacement synthesis when DNA polymerase encounters the 5'-end of a downstream Okazaki fragment. It enters the flap from the 5'-end and then tracks to cleave the flap base, leaving a nick for ligation. Also involved in the long patch base excision repair (LP-BER) pathway, by cleaving within the apurinic/apyrimidinic (AP) site-terminated flap. Acts as a genome stabilization factor that prevents flaps from equilibrating into structures that lead to duplications and deletions. Also possesses 5'-3' exonuclease activity on nicked or gapped double-stranded DNA, and exhibits RNase H activity. Also involved in replication and repair of rDNA and in repairing mitochondrial DNA. This is Flap endonuclease 1 from Lodderomyces elongisporus (strain ATCC 11503 / CBS 2605 / JCM 1781 / NBRC 1676 / NRRL YB-4239) (Yeast).